The chain runs to 1950 residues: E3 ubiquitin-protein ligase UBR1 (1950 aa).

The Zn(2+) site is built by histidine 118, cysteine 123, cysteine 136, cysteine 139, cysteine 148, cysteine 151, histidine 157, histidine 160, histidine 161, cysteine 175, cysteine 177, and cysteine 189. A UBR-type zinc finger spans residues 121–194; sequence RNCGRKFKIG…SPLHCKAEEQ (74 aa). Residues serine 296 and serine 300 each carry the phosphoserine modification. Positions 678 to 681 are ubiquitin-binding loop; the sequence is HVLH. Aspartate 952 is a binding site for Zn(2+). Residues 1165-1200 are UBC2-binding region (U2BR); that stretch reads KERKRRLAKKHQARLLAKFNNQQTKFMKEHESEFDE. Residues cysteine 1220, cysteine 1223, cysteine 1295, histidine 1297, histidine 1300, cysteine 1303, cysteine 1320, and cysteine 1323 each contribute to the Zn(2+) site. Residues 1220 to 1324 form an RING-type; atypical zinc finger; sequence CALCQDSSST…SNAFICPLCQ (105 aa). A cap helical domain (CHD) region spans residues 1333–1665; sequence LCQTSKANTG…YEYCGIIKLI (333 aa). The Zn(2+) site is built by cysteine 1703, cysteine 1706, histidine 1722, cysteine 1727, histidine 1763, and aspartate 1775. 2 disordered regions span residues 1826-1846 and 1893-1950; these read RPRRIPPTDEDDEDMEEGEDG and TLQP…REIW. Acidic residues-rich tracts occupy residues 1833–1846 and 1934–1950; these read TDEDDEDMEEGEDG and DEDDSDDNDDSDEREIW. Serine 1938 carries the post-translational modification Phosphoserine.

It belongs to the E3 ubiquitin-protein ligase UBR1-like family. As to quaternary structure, interacts with UBC2. Interacts with RPN2, RPT1 and RPT6 from the 26S proteasome.

The enzyme catalyses S-ubiquitinyl-[E2 ubiquitin-conjugating enzyme]-L-cysteine + [acceptor protein]-L-lysine = [E2 ubiquitin-conjugating enzyme]-L-cysteine + N(6)-ubiquitinyl-[acceptor protein]-L-lysine.. Its pathway is protein modification; protein ubiquitination. In terms of biological role, ubiquitin ligase protein which is a component of the N-end rule pathway. Recognizes and binds to proteins bearing specific N-terminal residues that are destabilizing according to the N-end rule, leading to their ubiquitination and subsequent degradation. Recognizes both type-1 and type-2 N-degrons, containing positively charged amino acids (Arg, Lys and His) and bulky and hydrophobic amino acids, respectively. In Saccharomyces cerevisiae (strain ATCC 204508 / S288c) (Baker's yeast), this protein is E3 ubiquitin-protein ligase UBR1.